The chain runs to 122 residues: Large ribosomal subunit protein uL14c (122 aa).

Belongs to the universal ribosomal protein uL14 family. In terms of assembly, part of the 50S ribosomal subunit.

The protein resides in the plastid. Functionally, binds to 23S rRNA. The sequence is that of Large ribosomal subunit protein uL14c from Cuscuta exaltata (Tall dodder).